A 915-amino-acid polypeptide reads, in one-letter code: MIRRIQPRCNSGLTGSVSAFEVLKKKFSTDVTVPSPVTRRQFCSVSPLLRNLPEEESDSMSVPHRLLSILSKPNWHKSPSLKSMVSAISPSHVSSLFSLDLDPKTALNFSHWISQNPRYKHSVYSYASLLTLLINNGYVGVVFKIRLLMIKSCDSVGDALYVLDLCRKMNKDERFELKYKLIIGCYNTLLNSLARFGLVDEMKQVYMEMLEDKVCPNIYTYNKMVNGYCKLGNVEEANQYVSKIVEAGLDPDFFTYTSLIMGYCQRKDLDSAFKVFNEMPLKGCRRNEVAYTHLIHGLCVARRIDEAMDLFVKMKDDECFPTVRTYTVLIKSLCGSERKSEALNLVKEMEETGIKPNIHTYTVLIDSLCSQCKFEKARELLGQMLEKGLMPNVITYNALINGYCKRGMIEDAVDVVELMESRKLSPNTRTYNELIKGYCKSNVHKAMGVLNKMLERKVLPDVVTYNSLIDGQCRSGNFDSAYRLLSLMNDRGLVPDQWTYTSMIDSLCKSKRVEEACDLFDSLEQKGVNPNVVMYTALIDGYCKAGKVDEAHLMLEKMLSKNCLPNSLTFNALIHGLCADGKLKEATLLEEKMVKIGLQPTVSTDTILIHRLLKDGDFDHAYSRFQQMLSSGTKPDAHTYTTFIQTYCREGRLLDAEDMMAKMRENGVSPDLFTYSSLIKGYGDLGQTNFAFDVLKRMRDTGCEPSQHTFLSLIKHLLEMKYGKQKGSEPELCAMSNMMEFDTVVELLEKMVEHSVTPNAKSYEKLILGICEVGNLRVAEKVFDHMQRNEGISPSELVFNALLSCCCKLKKHNEAAKVVDDMICVGHLPQLESCKVLICGLYKKGEKERGTSVFQNLLQCGYYEDELAWKIIIDGVGKQGLVEAFYELFNVMEKNGCKFSSQTYSLLIEGPPDST.

PPR repeat units follow at residues 182–216, 217–251, 252–286, 287–321, 322–356, 357–391, 392–426, 427–460, 461–495, 496–530, 531–565, 566–600, 601–635, 636–670, 671–705, 724–758, 759–794, 795–829, 830–864, and 865–899; these read IIGCYNTLLNSLARFGLVDEMKQVYMEMLEDKVCP, NIYTYNKMVNGYCKLGNVEEANQYVSKIVEAGLDP, DFFTYTSLIMGYCQRKDLDSAFKVFNEMPLKGCRR, NEVAYTHLIHGLCVARRIDEAMDLFVKMKDDECFP, TVRTYTVLIKSLCGSERKSEALNLVKEMEETGIKP, NIHTYTVLIDSLCSQCKFEKARELLGQMLEKGLMP, NVITYNALINGYCKRGMIEDAVDVVELMESRKLSP, NTRTYNELIKGYCKSNVHKAMGVLNKMLERKVLP, DVVTYNSLIDGQCRSGNFDSAYRLLSLMNDRGLVP, DQWTYTSMIDSLCKSKRVEEACDLFDSLEQKGVNP, NVVMYTALIDGYCKAGKVDEAHLMLEKMLSKNCLP, NSLTFNALIHGLCADGKLKEATLLEEKMVKIGLQP, TVSTDTILIHRLLKDGDFDHAYSRFQQMLSSGTKP, DAHTYTTFIQTYCREGRLLDAEDMMAKMRENGVSP, DLFTYSSLIKGYGDLGQTNFAFDVLKRMRDTGCEP, KQKGSEPELCAMSNMMEFDTVVELLEKMVEHSVTP, NAKSYEKLILGICEVGNLRVAEKVFDHMQRNEGISP, SELVFNALLSCCCKLKKHNEAAKVVDDMICVGHLP, QLESCKVLICGLYKKGEKERGTSVFQNLLQCGYYE, and DELAWKIIIDGVGKQGLVEAFYELFNVMEKNGCKF.

Belongs to the PPR family. P subfamily.

The polypeptide is Pentatricopeptide repeat-containing protein At5g65560 (Arabidopsis thaliana (Mouse-ear cress)).